The sequence spans 731 residues: DNA topoisomerase 1 (731 aa).

The Toprim domain maps to 17 to 130 (KHLVIVESPA…KRIVFNEITP (114 aa)). Mg(2+) contacts are provided by E23 and D96. In terms of domain architecture, Topo IA-type catalytic spans 144–569 (DTAKVNAQKA…DFYPAFSEKV (426 aa)). The interval 178–183 (SAGRVQ) is interaction with DNA. Residue Y312 is the O-(5'-phospho-DNA)-tyrosine intermediate of the active site. 3 consecutive C4-type zinc fingers follow at residues 591–617 (CSQC…FPEC), 628–657 (CPRP…FPVC), and 670–696 (CPQC…NPEC).

It belongs to the type IA topoisomerase family. In terms of assembly, monomer. It depends on Mg(2+) as a cofactor.

The enzyme catalyses ATP-independent breakage of single-stranded DNA, followed by passage and rejoining.. Functionally, releases the supercoiling and torsional tension of DNA, which is introduced during the DNA replication and transcription, by transiently cleaving and rejoining one strand of the DNA duplex. Introduces a single-strand break via transesterification at a target site in duplex DNA. The scissile phosphodiester is attacked by the catalytic tyrosine of the enzyme, resulting in the formation of a DNA-(5'-phosphotyrosyl)-enzyme intermediate and the expulsion of a 3'-OH DNA strand. The free DNA strand then undergoes passage around the unbroken strand, thus removing DNA supercoils. Finally, in the religation step, the DNA 3'-OH attacks the covalent intermediate to expel the active-site tyrosine and restore the DNA phosphodiester backbone. The protein is DNA topoisomerase 1 of Treponema pallidum (strain Nichols).